Consider the following 333-residue polypeptide: tRNA N6-adenosine threonylcarbamoyltransferase (333 aa).

Histidine 111 and histidine 115 together coordinate Fe cation. Substrate is bound by residues leucine 134 to glycine 138, aspartate 167, glycine 180, and asparagine 272. Aspartate 300 lines the Fe cation pocket.

It belongs to the KAE1 / TsaD family. The cofactor is Fe(2+).

The protein resides in the cytoplasm. The enzyme catalyses L-threonylcarbamoyladenylate + adenosine(37) in tRNA = N(6)-L-threonylcarbamoyladenosine(37) in tRNA + AMP + H(+). Required for the formation of a threonylcarbamoyl group on adenosine at position 37 (t(6)A37) in tRNAs that read codons beginning with adenine. Is involved in the transfer of the threonylcarbamoyl moiety of threonylcarbamoyl-AMP (TC-AMP) to the N6 group of A37, together with TsaE and TsaB. TsaD likely plays a direct catalytic role in this reaction. In Legionella pneumophila subsp. pneumophila (strain Philadelphia 1 / ATCC 33152 / DSM 7513), this protein is tRNA N6-adenosine threonylcarbamoyltransferase.